A 734-amino-acid chain; its full sequence is Methionine--tRNA ligase (734 aa).

The 'HIGH' region signature appears at 12 to 22 (PYVNNIPHLGN). Cys143, Cys146, Cys155, and Cys158 together coordinate Zn(2+). The 'KMSKS' region motif lies at 330–334 (KFSKS). Lys333 serves as a coordination point for ATP. The 106-residue stretch at 570 to 675 (FREKVLLRVV…QNPIAGERII (106 aa)) folds into the tRNA-binding domain.

The protein belongs to the class-I aminoacyl-tRNA synthetase family. MetG type 1 subfamily. In terms of assembly, homodimer. Zn(2+) serves as cofactor.

Its subcellular location is the cytoplasm. The enzyme catalyses tRNA(Met) + L-methionine + ATP = L-methionyl-tRNA(Met) + AMP + diphosphate. Is required not only for elongation of protein synthesis but also for the initiation of all mRNA translation through initiator tRNA(fMet) aminoacylation. The polypeptide is Methionine--tRNA ligase (Borreliella burgdorferi (strain ZS7) (Borrelia burgdorferi)).